The primary structure comprises 433 residues: Enolase (433 aa).

Gln-167 provides a ligand contact to (2R)-2-phosphoglycerate. Glu-209 (proton donor) is an active-site residue. Asp-246, Glu-291, and Asp-318 together coordinate Mg(2+). Residues Lys-343, Arg-372, Ser-373, and Lys-394 each coordinate (2R)-2-phosphoglycerate. Catalysis depends on Lys-343, which acts as the Proton acceptor.

Belongs to the enolase family. In terms of assembly, component of the RNA degradosome, a multiprotein complex involved in RNA processing and mRNA degradation. Requires Mg(2+) as cofactor.

The protein localises to the cytoplasm. It is found in the secreted. It localises to the cell surface. The catalysed reaction is (2R)-2-phosphoglycerate = phosphoenolpyruvate + H2O. Its pathway is carbohydrate degradation; glycolysis; pyruvate from D-glyceraldehyde 3-phosphate: step 4/5. In terms of biological role, catalyzes the reversible conversion of 2-phosphoglycerate (2-PG) into phosphoenolpyruvate (PEP). It is essential for the degradation of carbohydrates via glycolysis. This is Enolase from Edwardsiella ictaluri (strain 93-146).